We begin with the raw amino-acid sequence, 364 residues long: tRNA-specific 2-thiouridylase MnmA 1 (364 aa).

ATP is bound by residues 11–18 and phenylalanine 37; that span reads GMSGGTDS. Residue cysteine 96 is the Nucleophile of the active site. Cysteine 96 and cysteine 193 are oxidised to a cystine. Glycine 120 serves as a coordination point for ATP. The segment at 142 to 144 is interaction with tRNA; that stretch reads KDQ. The active-site Cysteine persulfide intermediate is cysteine 193. The tract at residues 309–310 is interaction with tRNA; it reads RY.

The protein belongs to the MnmA/TRMU family.

The protein resides in the cytoplasm. It carries out the reaction S-sulfanyl-L-cysteinyl-[protein] + uridine(34) in tRNA + AH2 + ATP = 2-thiouridine(34) in tRNA + L-cysteinyl-[protein] + A + AMP + diphosphate + H(+). Functionally, catalyzes the 2-thiolation of uridine at the wobble position (U34) of tRNA, leading to the formation of s(2)U34. The polypeptide is tRNA-specific 2-thiouridylase MnmA 1 (Bacteroides fragilis (strain ATCC 25285 / DSM 2151 / CCUG 4856 / JCM 11019 / LMG 10263 / NCTC 9343 / Onslow / VPI 2553 / EN-2)).